Consider the following 255-residue polypeptide: D-aminoacyl-tRNA deacylase (255 aa).

The protein belongs to the DtdA deacylase family. Monomer. It depends on Zn(2+) as a cofactor.

The enzyme catalyses a D-aminoacyl-tRNA + H2O = a tRNA + a D-alpha-amino acid + H(+). It carries out the reaction glycyl-tRNA(Ala) + H2O = tRNA(Ala) + glycine + H(+). Functionally, D-aminoacyl-tRNA deacylase with broad substrate specificity. By recycling D-aminoacyl-tRNA to D-amino acids and free tRNA molecules, this enzyme counteracts the toxicity associated with the formation of D-aminoacyl-tRNA entities in vivo. The polypeptide is D-aminoacyl-tRNA deacylase (Picrophilus torridus (strain ATCC 700027 / DSM 9790 / JCM 10055 / NBRC 100828 / KAW 2/3)).